The sequence spans 394 residues: Dihydroorotase (394 aa).

His15, His17, Lys98, His135, His175, and Asp245 together coordinate Zn(2+). Residue Lys98 is modified to N6-carboxylysine.

Belongs to the metallo-dependent hydrolases superfamily. DHOase family. Class II DHOase subfamily. It depends on Zn(2+) as a cofactor.

It carries out the reaction (S)-dihydroorotate + H2O = N-carbamoyl-L-aspartate + H(+). Its pathway is pyrimidine metabolism; UMP biosynthesis via de novo pathway; (S)-dihydroorotate from bicarbonate: step 3/3. The chain is Dihydroorotase (PYR3) from Mycosarcoma maydis (Corn smut fungus).